The chain runs to 238 residues: tRNA (guanine-N(7)-)-methyltransferase (238 aa).

Positions 68, 93, 120, and 143 each coordinate S-adenosyl-L-methionine. Aspartate 143 is a catalytic residue. Substrate is bound by residues lysine 147, aspartate 179, and 216-219 (TKFE).

The protein belongs to the class I-like SAM-binding methyltransferase superfamily. TrmB family.

The enzyme catalyses guanosine(46) in tRNA + S-adenosyl-L-methionine = N(7)-methylguanosine(46) in tRNA + S-adenosyl-L-homocysteine. The protein operates within tRNA modification; N(7)-methylguanine-tRNA biosynthesis. Its function is as follows. Catalyzes the formation of N(7)-methylguanine at position 46 (m7G46) in tRNA. The protein is tRNA (guanine-N(7)-)-methyltransferase of Aliivibrio salmonicida (strain LFI1238) (Vibrio salmonicida (strain LFI1238)).